A 310-amino-acid chain; its full sequence is Porphobilinogen deaminase (310 aa).

C243 is subject to S-(dipyrrolylmethanemethyl)cysteine.

It belongs to the HMBS family. As to quaternary structure, monomer. Requires dipyrromethane as cofactor.

The catalysed reaction is 4 porphobilinogen + H2O = hydroxymethylbilane + 4 NH4(+). Its pathway is porphyrin-containing compound metabolism; protoporphyrin-IX biosynthesis; coproporphyrinogen-III from 5-aminolevulinate: step 2/4. Its function is as follows. Tetrapolymerization of the monopyrrole PBG into the hydroxymethylbilane pre-uroporphyrinogen in several discrete steps. The chain is Porphobilinogen deaminase from Methylobacillus flagellatus (strain ATCC 51484 / DSM 6875 / VKM B-1610 / KT).